The chain runs to 347 residues: NADH-ubiquinone oxidoreductase chain 2 (347 aa).

10 helical membrane-spanning segments follow: residues 1–21 (MNPL…TIVM), 25–45 (HWLV…PVLM), 59–79 (YFLT…INLI), 96–116 (IIMT…FWVP), 122–142 (IQLS…ISIL), 150–170 (NLNL…WGGL), 201–221 (ALLN…VFML), 242–262 (TALL…GFLP), 274–294 (NSVI…YFYM), and 326–346 (LSPL…LTLL).

The protein belongs to the complex I subunit 2 family. In terms of assembly, core subunit of respiratory chain NADH dehydrogenase (Complex I) which is composed of 45 different subunits. Interacts with TMEM242.

It is found in the mitochondrion inner membrane. It catalyses the reaction a ubiquinone + NADH + 5 H(+)(in) = a ubiquinol + NAD(+) + 4 H(+)(out). In terms of biological role, core subunit of the mitochondrial membrane respiratory chain NADH dehydrogenase (Complex I) which catalyzes electron transfer from NADH through the respiratory chain, using ubiquinone as an electron acceptor. Essential for the catalytic activity and assembly of complex I. This is NADH-ubiquinone oxidoreductase chain 2 from Eidolon helvum (Straw-colored fruit bat).